We begin with the raw amino-acid sequence, 235 residues long: ATP synthase subunit a (235 aa).

The next 5 helical transmembrane spans lie at 17–37, 76–96, 113–133, 179–201, and 211–230; these read TTNI…LYGM, SFFA…GLIF, PVVT…AGVA, LLMS…PGLF, and VFIG…VYIS.

The protein belongs to the ATPase A chain family. F-type ATPases have 2 components, CF(1) - the catalytic core - and CF(0) - the membrane proton channel. CF(1) has five subunits: alpha(3), beta(3), gamma(1), delta(1), epsilon(1). CF(0) has three main subunits: a(1), b(2) and c(9-12). The alpha and beta chains form an alternating ring which encloses part of the gamma chain. CF(1) is attached to CF(0) by a central stalk formed by the gamma and epsilon chains, while a peripheral stalk is formed by the delta and b chains.

The protein localises to the cell membrane. Functionally, key component of the proton channel; it plays a direct role in the translocation of protons across the membrane. This is ATP synthase subunit a from Limosilactobacillus reuteri subsp. reuteri (strain JCM 1112) (Lactobacillus reuteri).